A 658-amino-acid polypeptide reads, in one-letter code: Pro-secreted protein ORF2 (658 aa).

An N-terminal signal peptide occupies residues 1 to 19 (MRSRALLFLLFVLLPMLPA). The disordered stretch occupies residues 62 to 124 (SDIPAAAGTG…PDTAPVPDAD (63 aa)). The segment covering 91–122 (RPAASTRRRPAPAGASPLTAVAPAPDTAPVPD) has biased composition (low complexity). N-linked (GlcNAc...) asparagine; by host glycosylation is found at Asn135 and Asn308. The tract at residues 366–392 (IALTLFNLADTLLGGLPTELISSAGGQ) is particle formation. N-linked (GlcNAc...) asparagine; by host glycosylation occurs at Asn560. An oligomerization region spans residues 583–608 (TTNLGSGPVSVSAVGVLAPHSALAAL).

This sequence belongs to the hepevirus capsid protein family. As to quaternary structure, homodimer. Self-assembles to form the capsid. The capsid is dominated by dimers that define the 30 morphological units. Interacts with phosphorylated protein ORF3. Interacts with host TMEM134. Interacts with host ASGR1 and ASGR2; these interactions facilitate infection of host hepatocytes. Cleaved by host protease in the N-terminus. Post-translationally, N-glycosylated. In terms of processing, not N-glycosylated. The C-terminus of the capsid protein ORF2 is truncated in non-enveloped virions shedded in feces, probably due to host proteases.

It is found in the secreted. It localises to the virion. Its subcellular location is the host cytoplasm. The protein resides in the host endoplasmic reticulum. The protein localises to the host Golgi apparatus. It is found in the host cell surface. It localises to the host nucleus. Plays a role in the inhibition of host antibody-mediated neutralization without blocking viral cell entry. Functionally, forms an icosahedral capsid with a T=1 symmetry and a 34 nm diameter. The capsid is composed of 60 copies linked to each other. Binds to the 5' end of the genomic RNA to mediate genome encapsidation. Binds to heparin surface proteoglycans (HSPGs) to mediate viral entry. Additionally, the interactions with host ASGR1 and ASGR2 facilitate viral infection of hepatocytes. Inhibits IFN production by blocking host TBK1-induced IRF3 phosphorylation. The nuclear form probably modulates host gene expression. The chain is Pro-secreted protein ORF2 from Bandicota bengalensis (lesser bandicoot rat).